A 516-amino-acid chain; its full sequence is Delta(24)-sterol reductase (516 aa).

Positions 1-22 (MEPAVSLAVCALLFLLWVRVKG) are cleaved as a signal peptide. Topologically, residues 23 to 31 (LEFVLIHQR) are lumenal. A helical membrane pass occupies residues 32–52 (WVFVCLFLLPLSLIFDIYYYV). At 53 to 516 (RAWVVFKLSS…YDKICKAARH (464 aa)) the chain is on the cytoplasmic side. The region spanning 58-234 (FKLSSAPRLH…VAAEIRIIPA (177 aa)) is the FAD-binding PCMH-type domain. Position 163–175 (163–175 (TVGGLIMGTGIES)) interacts with FAD.

Belongs to the FAD-binding oxidoreductase/transferase type 4 family. The cofactor is FAD.

It localises to the endoplasmic reticulum membrane. It is found in the golgi apparatus membrane. It catalyses the reaction 5alpha-cholest-8-en-3beta-ol + NADP(+) = zymosterol + NADPH + H(+). The catalysed reaction is cholesterol + NADP(+) = desmosterol + NADPH + H(+). The enzyme catalyses lanosterol + NADPH + H(+) = 24,25-dihydrolanosterol + NADP(+). It participates in steroid biosynthesis; cholesterol biosynthesis. Its function is as follows. Catalyzes the reduction of the delta-24 double bond of sterol intermediates during cholesterol biosynthesis. In addition to its cholesterol-synthesizing activity, can protect cells from oxidative stress by reducing caspase 3 activity during apoptosis induced by oxidative stress. Also protects against amyloid-beta peptide-induced apoptosis. This Mus musculus (Mouse) protein is Delta(24)-sterol reductase (Dhcr24).